The following is a 152-amino-acid chain: Interleukin-1 family member 10 (152 aa).

Belongs to the IL-1 family. As to quaternary structure, interacts with cargo receptor TMED10; the interaction mediates the translocation from the cytoplasm into the ERGIC (endoplasmic reticulum-Golgi intermediate compartment) and thereby secretion.

It localises to the cytoplasm. Its subcellular location is the endoplasmic reticulum-Golgi intermediate compartment. The protein resides in the secreted. Its function is as follows. Cytokine with immunomodulatory activity. Alone, does not induce cytokine production, but reduces IL22 and IL17A production by T-cells in response to heat-killed Candida albicans. Reduces IL36G-induced production of IL8 by peripheral blood mononuclear cells. Increases IL6 production by dendritic cells stimulated by bacterial lipopolysaccharides (LPS). Ligand for IL-36R/IL1RL2. This Mus musculus (Mouse) protein is Interleukin-1 family member 10 (Il1f10).